Reading from the N-terminus, the 502-residue chain is ATP synthase subunit alpha (502 aa).

Gly169–Thr176 contributes to the ATP binding site.

The protein belongs to the ATPase alpha/beta chains family. As to quaternary structure, F-type ATPases have 2 components, CF(1) - the catalytic core - and CF(0) - the membrane proton channel. CF(1) has five subunits: alpha(3), beta(3), gamma(1), delta(1), epsilon(1). CF(0) has three main subunits: a(1), b(2) and c(9-12). The alpha and beta chains form an alternating ring which encloses part of the gamma chain. CF(1) is attached to CF(0) by a central stalk formed by the gamma and epsilon chains, while a peripheral stalk is formed by the delta and b chains.

It is found in the cell inner membrane. The enzyme catalyses ATP + H2O + 4 H(+)(in) = ADP + phosphate + 5 H(+)(out). Its function is as follows. Produces ATP from ADP in the presence of a proton gradient across the membrane. The alpha chain is a regulatory subunit. The sequence is that of ATP synthase subunit alpha from Thermodesulfovibrio yellowstonii (strain ATCC 51303 / DSM 11347 / YP87).